Reading from the N-terminus, the 247-residue chain is UPF0280 protein MMP1236 (247 aa).

The protein belongs to the UPF0280 family.

This chain is UPF0280 protein MMP1236, found in Methanococcus maripaludis (strain DSM 14266 / JCM 13030 / NBRC 101832 / S2 / LL).